The sequence spans 807 residues: Anaphase-promoting complex subunit 4 (807 aa).

Tyr469 bears the Phosphotyrosine mark. The disordered stretch occupies residues 755-788 (DESSDDEEEAGGKPVKIKEEVLSESETEAHQDAA). A phosphoserine mark is found at Ser757 and Ser758. The segment covering 770–785 (KIKEEVLSESETEAHQ) has biased composition (basic and acidic residues). A Glycyl lysine isopeptide (Lys-Gly) (interchain with G-Cter in SUMO2) cross-link involves residue Lys772. A phosphoserine mark is found at Ser777 and Ser779. Lys797 is covalently cross-linked (Glycyl lysine isopeptide (Lys-Gly) (interchain with G-Cter in SUMO2)).

It belongs to the APC4 family. In terms of assembly, the mammalian APC/C is composed at least of 14 distinct subunits ANAPC1, ANAPC2, CDC27/APC3, ANAPC4, ANAPC5, CDC16/APC6, ANAPC7, CDC23/APC8, ANAPC10, ANAPC11, CDC26/APC12, ANAPC13, ANAPC15 and ANAPC16 that assemble into a complex of at least 19 chains with a combined molecular mass of around 1.2 MDa; APC/C interacts with FZR1 and FBXO5. In the context of the APC/C complex, directly interacts with UBE2S. Interacts with FBXO43.

It is found in the nucleus. It participates in protein modification; protein ubiquitination. Its function is as follows. Component of the anaphase promoting complex/cyclosome (APC/C), a cell cycle-regulated E3 ubiquitin ligase that controls progression through mitosis and the G1 phase of the cell cycle. The APC/C complex acts by mediating ubiquitination and subsequent degradation of target proteins: it mainly mediates the formation of 'Lys-11'-linked polyubiquitin chains and, to a lower extent, the formation of 'Lys-48'- and 'Lys-63'-linked polyubiquitin chains. The APC/C complex catalyzes assembly of branched 'Lys-11'-/'Lys-48'-linked branched ubiquitin chains on target proteins. This chain is Anaphase-promoting complex subunit 4 (Anapc4), found in Mus musculus (Mouse).